The primary structure comprises 193 residues: ECF RNA polymerase sigma factor SigK (193 aa).

A sigma-70 factor domain-2 region spans residues 35-101 (LYDRTRSRVY…RRAVDRVRSE (67 aa)). The Polymerase core binding motif lies at 59-62 (ETTQ). Positions 140 to 187 (MGSLSDLQREAIQLAYYEGLTYVQVSERLSANLATIKSRMRDGIRGLK) are sigma-70 factor domain-4. Residues 161-180 (YVQVSERLSANLATIKSRMR) constitute a DNA-binding region (H-T-H motif).

It belongs to the sigma-70 factor family. ECF subfamily. In terms of assembly, interacts transiently with the RNA polymerase catalytic core formed by RpoA, RpoB, RpoC and RpoZ (2 alpha, 1 beta, 1 beta' and 1 omega subunit) to form the RNA polymerase holoenzyme that can initiate transcription. Interacts (via sigma-70 factor domain 4) with anti-sigma-K factor RskA.

Functionally, sigma factors are initiation factors that promote the attachment of RNA polymerase to specific initiation sites and are then released. Extracytoplasmic function (ECF) sigma factors are held in an inactive form by an anti-sigma factor until released by regulated intramembrane proteolysis. This chain is ECF RNA polymerase sigma factor SigK (sigK), found in Mycobacterium sp. (strain JLS).